Here is a 126-residue protein sequence, read N- to C-terminus: Profilin (126 aa).

It belongs to the profilin family. As to quaternary structure, occurs in many kinds of cells as a complex with monomeric actin in a 1:1 ratio. As to expression, expressed in ovary and head.

It is found in the cytoplasm. Its subcellular location is the cytoskeleton. Binds to actin and affects the structure of the cytoskeleton. At high concentrations, profilin prevents the polymerization of actin, whereas it enhances it at low concentrations. By binding to PIP2, it may inhibit the formation of IP3 and DG. This profilin is required for intercellular cytoplasm transport during Drosophila oogenesis. Function in neurons is essential for adult survival, and is important for climbing behavior and activity. This Drosophila melanogaster (Fruit fly) protein is Profilin (chic).